We begin with the raw amino-acid sequence, 183 residues long: Isopentenyl-diphosphate Delta-isomerase (183 aa).

2 residues coordinate Mn(2+): His-26 and His-33. The Nudix hydrolase domain maps to 31–169 (PLHFAFSCYV…PFAFSPWMVE (139 aa)). The active site involves Cys-68. A Mg(2+)-binding site is contributed by Cys-68. Position 70 (His-70) interacts with Mn(2+). Residue Glu-88 participates in Mg(2+) binding. Mn(2+) is bound by residues Glu-118 and Glu-120. The active site involves Glu-120.

It belongs to the IPP isomerase type 1 family. Requires Mg(2+) as cofactor. Mn(2+) serves as cofactor.

The protein resides in the cytoplasm. The catalysed reaction is isopentenyl diphosphate = dimethylallyl diphosphate. It functions in the pathway isoprenoid biosynthesis; dimethylallyl diphosphate biosynthesis; dimethylallyl diphosphate from isopentenyl diphosphate: step 1/1. In terms of biological role, catalyzes the 1,3-allylic rearrangement of the homoallylic substrate isopentenyl (IPP) to its highly electrophilic allylic isomer, dimethylallyl diphosphate (DMAPP). In Corynebacterium diphtheriae (strain ATCC 700971 / NCTC 13129 / Biotype gravis), this protein is Isopentenyl-diphosphate Delta-isomerase.